Consider the following 231-residue polypeptide: Ribosomal RNA small subunit methyltransferase nep-1 (231 aa).

S-adenosyl-L-methionine-binding positions include Met-161, Gly-188, Gly-193, and 206-211; that span reads ISNYPL.

The protein belongs to the class IV-like SAM-binding methyltransferase superfamily. RNA methyltransferase NEP1 family. In terms of assembly, homodimer.

The protein resides in the nucleus. It is found in the nucleolus. It carries out the reaction a pseudouridine in rRNA + S-adenosyl-L-methionine = an N(1)-methylpseudouridine in rRNA + S-adenosyl-L-homocysteine + H(+). Its function is as follows. S-adenosyl-L-methionine-dependent pseudouridine N(1)-methyltransferase that methylates a pseudouridine in 18S rRNA. Involved the biosynthesis of the hypermodified N1-methyl-N3-(3-amino-3-carboxypropyl) pseudouridine (m1acp3-Psi) conserved in eukaryotic 18S rRNA. Also has an essential role in 40S ribosomal subunit biogenesis independent on its methyltransferase activity, facilitating the incorporation of ribosomal protein S19 during the formation of pre-ribosomes. This is Ribosomal RNA small subunit methyltransferase nep-1 from Caenorhabditis elegans.